We begin with the raw amino-acid sequence, 683 residues long: uncharacterized protein (683 aa).

14 helical membrane-spanning segments follow: residues L12 to L32, L41 to I61, M84 to F104, G110 to P130, I162 to V182, F194 to M214, Q221 to W241, L377 to L397, V413 to L433, I495 to L515, V548 to L568, I573 to V593, A603 to V623, and I645 to L665.

This sequence belongs to the sodium:solute symporter (SSF) (TC 2.A.21) family.

The protein localises to the cell membrane. This is an uncharacterized protein from Cupriavidus necator (strain ATCC 17699 / DSM 428 / KCTC 22496 / NCIMB 10442 / H16 / Stanier 337) (Ralstonia eutropha).